We begin with the raw amino-acid sequence, 415 residues long: MATH domain and coiled-coil domain-containing protein At2g42465 (415 aa).

Residues arginine 6–isoleucine 130 enclose the MATH domain. A coiled-coil region spans residues phenylalanine 244–lysine 341.

The protein is MATH domain and coiled-coil domain-containing protein At2g42465 of Arabidopsis thaliana (Mouse-ear cress).